We begin with the raw amino-acid sequence, 447 residues long: uncharacterized protein (447 aa).

It belongs to the class-II fumarase/aspartase family.

The protein resides in the cytoplasm. It is found in the nucleus. This is an uncharacterized protein from Schizosaccharomyces pombe (strain 972 / ATCC 24843) (Fission yeast).